We begin with the raw amino-acid sequence, 197 residues long: MGVTRIGLLGGSFDPVHVAHIALADTARQFLGLDQVQLIPAANPWQRQPLKASAPHRLRMLELAIAGHPALAINPVEIERGGATYTADTVRALPGGPQYFWLLGTDQLQNFCTWRDWQDIAARIELAVATRPGASIAPPAELATWLAAHRRQLHELPFAPMAVSASDIRQRLAADAATDGLLPEPVAAYIATHHLYR.

Belongs to the NadD family.

The enzyme catalyses nicotinate beta-D-ribonucleotide + ATP + H(+) = deamido-NAD(+) + diphosphate. Its pathway is cofactor biosynthesis; NAD(+) biosynthesis; deamido-NAD(+) from nicotinate D-ribonucleotide: step 1/1. Functionally, catalyzes the reversible adenylation of nicotinate mononucleotide (NaMN) to nicotinic acid adenine dinucleotide (NaAD). This is Probable nicotinate-nucleotide adenylyltransferase from Bordetella parapertussis (strain 12822 / ATCC BAA-587 / NCTC 13253).